Here is a 352-residue protein sequence, read N- to C-terminus: PDZ and LIM domain protein 2 (352 aa).

The region spanning 1–84 (MALTVDVAGP…PLRLQLDRSQ (84 aa)) is the PDZ domain. 2 disordered regions span residues 67-97 (SKIR…DSSL) and 111-149 (YTES…TGEA). The span at 81–95 (DRSQATSPGQTNGDS) shows a compositional bias: polar residues. Residues 111-135 (YTESQSSLRSSYSSPTSLSPRAGSP) show a composition bias toward low complexity. Residue Ser-124 is modified to Phosphoserine. Residue Thr-126 is modified to Phosphothreonine. Phosphoserine occurs at positions 127, 129, 134, 137, 143, 161, 197, 203, 213, and 266. The disordered stretch occupies residues 170–213 (LSYSGRPGSRQAGLGRAGDSAVLVLPPSPGPRSSRPSMDSEGGS). The region spanning 284-344 (HTCEKCSTSI…EKHARQRYSA (61 aa)) is the LIM zinc-binding domain.

In terms of assembly, interacts with alpha-actinins ACTN1 and ACTN4, FLNA and MYH9. Interacts (via LIM zinc-binding domain) with MKRN2.

It is found in the cytoplasm. Its subcellular location is the nucleus. It localises to the cytoskeleton. In terms of biological role, probable adapter protein located at the actin cytoskeleton that promotes cell attachment. Necessary for the migratory capacity of epithelial cells. Overexpression enhances cell adhesion to collagen and fibronectin and suppresses anchorage independent growth. May contribute to tumor cell migratory capacity. The chain is PDZ and LIM domain protein 2 (PDLIM2) from Homo sapiens (Human).